The primary structure comprises 345 residues: UPF0324 membrane protein RB0971 (345 aa).

The next 10 helical transmembrane spans lie at 13–32 (SLSVVLSTYGPGLLVTAAVA), 42–61 (YGAPAMLMALLLGIAFHFLA), 93–115 (LLIGLGGGTILLLVSAIVATILF), 130–152 (ALLTSGAVAICGASAAMAIAAVL), 161–183 (NLIFTVLSVTVLSTLAMIGYPIV), 193–215 (ATGIFFGGTIHDVAQVVGAGFSV), 228–247 (LIRVTMLAPVVLIFSLVLRS), 262–284 (VPGFVLAFLVLAGFNSAGLVPVL), 291–310 (AISRWALLAGIVAVGMKTSL), and 320–342 (AVALVVAETLFIAVFILAGMYYL).

Belongs to the UPF0324 family.

It localises to the cell membrane. This chain is UPF0324 membrane protein RB0971, found in Rhizobium meliloti (strain 1021) (Ensifer meliloti).